Consider the following 701-residue polypeptide: Protein SOSEKI 1 (701 aa).

Residues L8–D101 form a DIX-like oligomerization domain region. Disordered stretches follow at residues S238–G262, L300–E329, P366–K389, and I538–P575. Basic and acidic residues predominate over residues S306–S319. The C2HC/C3H-type zinc-finger motif lies at I658–A687. The Zn(2+) site is built by C662, C665, H677, and C681.

It belongs to the SOSEKI family. As to quaternary structure, homodimer. Forms long polymer filaments with other SOKs proteins polymers crucial for polar localization and biological activity. It depends on Zn(2+) as a cofactor.

It localises to the cell membrane. Functionally, SOSEKI proteins locally interpret global polarity cues and can influence cell division orientation to coordinate cell polarization relative to body axes. In Physcomitrium patens (Spreading-leaved earth moss), this protein is Protein SOSEKI 1.